We begin with the raw amino-acid sequence, 142 residues long: Hemoglobin subunit zeta (142 aa).

Residue S2 is modified to N-acetylserine. In terms of domain architecture, Globin spans S2–R142. At T29 the chain carries Phosphothreonine. S53 carries the post-translational modification Phosphoserine. H59 lines the heme b pocket. Phosphoserine occurs at positions 73 and 82. Residue H88 coordinates heme b.

The protein belongs to the globin family. In terms of assembly, heterotetramer of two zeta chains and beta-type chains.

Functionally, the zeta chain is an alpha-type chain of mammalian embryonic hemoglobin. This Capra hircus (Goat) protein is Hemoglobin subunit zeta (HBZ1).